Here is a 330-residue protein sequence, read N- to C-terminus: Tetraacyldisaccharide 4'-kinase (330 aa).

58–65 (TVGGSGKT) lines the ATP pocket.

This sequence belongs to the LpxK family.

It carries out the reaction a lipid A disaccharide + ATP = a lipid IVA + ADP + H(+). The protein operates within glycolipid biosynthesis; lipid IV(A) biosynthesis; lipid IV(A) from (3R)-3-hydroxytetradecanoyl-[acyl-carrier-protein] and UDP-N-acetyl-alpha-D-glucosamine: step 6/6. Its function is as follows. Transfers the gamma-phosphate of ATP to the 4'-position of a tetraacyldisaccharide 1-phosphate intermediate (termed DS-1-P) to form tetraacyldisaccharide 1,4'-bis-phosphate (lipid IVA). The polypeptide is Tetraacyldisaccharide 4'-kinase (Shewanella halifaxensis (strain HAW-EB4)).